The sequence spans 833 residues: Disintegrin and metalloproteinase domain-containing protein 17 (833 aa).

An N-terminal signal peptide occupies residues M1–A17. The Peptidase M12B domain maps to N223–S474. Residues A301 to M345 form an interaction with classical swine fever virus envelope glycoprotein E2 region. 3 disulfides stabilise this stretch: C365–C469, C423–C453, and C534–C555. H405 contacts Zn(2+). The active site involves E406. Zn(2+)-binding residues include H409 and H415. Residues N475 to D563 enclose the Disintegrin domain. Residues I672–H692 form a helical membrane-spanning segment. 2 disordered regions span residues T735–A760 and Q772–C833. 3 stretches are compositionally biased toward basic and acidic residues: residues T777 to P790, S800 to S816, and S824 to C833.

In terms of assembly, (Microbial infection) Interacts (via metalloproteinase domain) with classical swine fever virus envelope glycoprotein E2; this interaction allows binding and probably entry of the virus into the cell. Interacts with MAD2L1, MAPK14 and MUC1. Interacts with iRhom1/RHBDF1 and iRhom2/RHBDF2. Interacts with FRMD8 via its interaction with iRhom1/RHBDF1 and iRhom2/RHBDF2. It depends on Zn(2+) as a cofactor. The precursor is cleaved by a furin endopeptidase. Post-translationally, phosphorylated.

The protein resides in the membrane. It carries out the reaction Narrow endopeptidase specificity. Cleaves Pro-Leu-Ala-Gln-Ala-|-Val-Arg-Ser-Ser-Ser in the membrane-bound, 26-kDa form of tumor necrosis factor alpha (TNFalpha). Similarly cleaves other membrane-anchored, cell-surface proteins to 'shed' the extracellular domains.. Its function is as follows. Transmembrane metalloprotease which mediates the ectodomain shedding of a myriad of transmembrane proteins including adhesion proteins, growth factor precursors and cytokines important for inflammation and immunity. Cleaves the membrane-bound precursor of TNF-alpha to its mature soluble form. Responsible for the proteolytical release of soluble JAM3 from endothelial cells surface. Responsible for the proteolytic release of several other cell-surface proteins, including p75 TNF-receptor, interleukin 1 receptor type II, p55 TNF-receptor, transforming growth factor-alpha, L-selectin, growth hormone receptor, MUC1 and the amyloid precursor protein. Acts as an activator of Notch pathway by mediating cleavage of Notch, generating the membrane-associated intermediate fragment called Notch extracellular truncation (NEXT). Plays a role in the proteolytic processing of ACE2. Plays a role in hemostasis through shedding of GP1BA, the platelet glycoprotein Ib alpha chain. Mediates the proteolytic cleavage of LAG3, leading to release the secreted form of LAG3. Mediates the proteolytic cleavage of IL6R, leading to the release of secreted form of IL6R. Mediates the proteolytic cleavage and shedding of FCGR3A upon NK cell stimulation, a mechanism that allows for increased NK cell motility and detachment from opsonized target cells. Cleaves TREM2, resulting in shedding of the TREM2 ectodomain. Functionally, (Microbial infection) Acts as a receptor for classical swine fever virus. This chain is Disintegrin and metalloproteinase domain-containing protein 17 (ADAM17), found in Sus scrofa (Pig).